A 99-amino-acid polypeptide reads, in one-letter code: Class II hydrophobin B (99 aa).

An N-terminal signal peptide occupies residues 1 to 15 (MKFFAIAALFAGALA). Intrachain disulfides connect cysteine 30–cysteine 79 and cysteine 40–cysteine 70.

Belongs to the cerato-ulmin hydrophobin family.

The protein resides in the secreted. The protein localises to the cell wall. It localises to the vacuole. Its subcellular location is the cytoplasmic vesicle. Aerial growth, conidiation, and dispersal of filamentous fungi in the environment rely upon a capability of their secreting small amphipathic proteins called hydrophobins (HPBs) with low sequence identity. Class I can self-assemble into an outermost layer of rodlet bundles on aerial cell surfaces, conferring cellular hydrophobicity that supports fungal growth, development and dispersal; whereas Class II form highly ordered films at water-air interfaces through intermolecular interactions but contribute nothing to the rodlet structure. Hyd2B contributes to certain cell wall-related features, such as hydrophobicity but is not involved in cell wall-related events during fungal proliferation in host hemocoel. Does not contribute to conidial hydrophobicity. Involved in insect hemocoel colonization independent of cell hydrophobicity. This is Class II hydrophobin B from Beauveria bassiana (strain ARSEF 2860) (White muscardine disease fungus).